A 311-amino-acid polypeptide reads, in one-letter code: Arginine/serine-rich protein 1 (311 aa).

The disordered stretch occupies residues 1–125 (MSTYVNDMWP…RSRSRSRGRS (125 aa)). Ser-12 is modified (phosphoserine). Positions 20–31 (STSRSGGSSRLS) are enriched in low complexity. Positions 32-123 (SRSRSRSFSR…RSRSRSRSRG (92 aa)) are enriched in basic residues. Phosphoserine occurs at positions 109 and 111. Residue Arg-135 is modified to Omega-N-methylarginine.

Belongs to the RSRP family. Phosphorylated. Phosphorylation at Ser-109 and Ser-111 mediates the interaction with spliceosome proteins.

It is found in the nucleus. In terms of biological role, probably acts as a spliceosomal factor that contributes to spliceosome assembly and regulates the isoform switching of proteins such as PARP6. This Pongo abelii (Sumatran orangutan) protein is Arginine/serine-rich protein 1 (RSRP1).